The chain runs to 1057 residues: Diacylglycerol kinase iota (1057 aa).

Residues 15–59 (AARGPARAPAAAAAAAASPPGPCSGAACAPSAAAGAGAMNPSSSA) show a composition bias toward low complexity. Disordered stretches follow at residues 15 to 74 (AARG…SSGS) and 334 to 358 (LKAS…MEQE). Residues 337–352 (SNRKKKRTSFKRKASK) are compositionally biased toward basic residues. One can recognise a DAGKc domain in the interval 372-507 (PLMKPLLVFV…DRWNLHVERN (136 aa)). ANK repeat units lie at residues 950–979 (DHCS…SELL) and 986–1015 (TGET…SLRK). Residues 1014–1024 (RKTDSKGKTPQ) are compositionally biased toward basic and acidic residues. Residues 1014–1033 (RKTDSKGKTPQERAQQAGDP) form a disordered region. The PDZ-binding signature appears at 1055-1057 (TAV).

The protein belongs to the eukaryotic diacylglycerol kinase family. Interacts (via PDZ-binding motif) with DLG4; controls the localization of DGKI to the synapse. Interacts (via PDZ-binding motif) with DLG1. Interacts (via PDZ-binding motif) with DLG2. Interacts (via PDZ-binding motif) with DLG3. May interact with RASGRP3; involved in the regulation of RASGRP3 activity. As to expression, specifically expressed in brain and retina. In brain, highly expressed in hippocampus, caudate nucleus, occipital pole, cerebral cortex, and cerebellum. Also detected in kidney.

The protein resides in the cell projection. It localises to the axon. The protein localises to the dendrite. It is found in the presynapse. Its subcellular location is the postsynapse. The protein resides in the postsynaptic density. It localises to the synaptic cell membrane. The protein localises to the cytoplasmic vesicle. It is found in the secretory vesicle. Its subcellular location is the synaptic vesicle membrane. The protein resides in the cytoplasm. It localises to the cytosol. The protein localises to the nucleus. The enzyme catalyses a 1,2-diacyl-sn-glycerol + ATP = a 1,2-diacyl-sn-glycero-3-phosphate + ADP + H(+). It catalyses the reaction 1,2-di-(9Z-octadecenoyl)-sn-glycerol + ATP = 1,2-di-(9Z-octadecenoyl)-sn-glycero-3-phosphate + ADP + H(+). The catalysed reaction is 1-octadecanoyl-2-(5Z,8Z,11Z,14Z-eicosatetraenoyl)-sn-glycerol + ATP = 1-octadecanoyl-2-(5Z,8Z,11Z,14Z-eicosatetraenoyl)-sn-glycero-3-phosphate + ADP + H(+). It carries out the reaction 1-octadecanoyl-2-(9Z,12Z)-octadecadienoyl-sn-glycerol + ATP = 1-octadecanoyl-2-(9Z,12Z-octadecadienoyl)-sn-glycero-3-phosphate + ADP + H(+). Its pathway is lipid metabolism; glycerolipid metabolism. Diacylglycerol kinase that converts diacylglycerol/DAG into phosphatidic acid/phosphatidate/PA and regulates the respective levels of these two bioactive lipids. Thereby, acts as a central switch between the signaling pathways activated by these second messengers with different cellular targets and opposite effects in numerous biological processes. Has probably no preference for any of the diacylglycerols in terms of the acyl chain composition, especially for the acyl chain at the sn-2 position. By controlling the diacylglycerol/DAG-mediated activation of RASGRP3, negatively regulates the Rap1 signaling pathway. May play a role in presynaptic diacylglycerol/DAG signaling and control neurotransmitter release during metabotropic glutamate receptor-dependent long-term depression. The sequence is that of Diacylglycerol kinase iota from Homo sapiens (Human).